We begin with the raw amino-acid sequence, 235 residues long: Protein CIST1 (235 aa).

An N-terminal signal peptide occupies residues 1–31; sequence MASSQPPLPPPPPPLLLLALLLLLKVSDTSS. 2 stretches are compositionally biased toward low complexity: residues 28 to 61 and 76 to 110; these read DTSS…SSPT and STSH…SQPE. A disordered region spans residues 28–159; sequence DTSSSVSTAT…TGPPSVSLAT (132 aa). Residues 32–184 are Extracellular-facing; that stretch reads SVSTATSTAS…GVPRLHRNPG (153 aa). Residue asparagine 45 is glycosylated (N-linked (GlcNAc...) asparagine). Polar residues predominate over residues 114 to 136; that stretch reads HPSSGSPSSEHTVTSPSLGSVSL. A helical transmembrane segment spans residues 185–205; the sequence is VVVAVCLLVSALLIGGAIMAV. Residues 206–235 lie on the Cytoplasmic side of the membrane; the sequence is RRCHNGVSEFQKLDEGLVSRRSSSAHHTLP.

As to expression, highly expressed in large intestine, small intestine, rumen, and kidney tissues.

The protein localises to the membrane. In Bos taurus (Bovine), this protein is Protein CIST1 (CIST1).